A 218-amino-acid chain; its full sequence is Elongation factor Ts (218 aa).

The tract at residues 82-85 is involved in Mg(2+) ion dislocation from EF-Tu; sequence TDFV.

The protein belongs to the EF-Ts family.

The protein resides in the cytoplasm. In terms of biological role, associates with the EF-Tu.GDP complex and induces the exchange of GDP to GTP. It remains bound to the aminoacyl-tRNA.EF-Tu.GTP complex up to the GTP hydrolysis stage on the ribosome. This is Elongation factor Ts from Prochlorococcus marinus (strain MIT 9312).